The sequence spans 399 residues: 4-hydroxyphenylpyruvate dioxygenase (399 aa).

VOC domains follow at residues 23 to 166 (GYDH…LIER) and 197 to 355 (RIDH…LFTK). Fe cation-binding residues include histidine 200, histidine 283, and glutamate 366.

It belongs to the 4HPPD family. Fe cation serves as cofactor.

It carries out the reaction 3-(4-hydroxyphenyl)pyruvate + O2 = homogentisate + CO2. Its pathway is amino-acid degradation; L-phenylalanine degradation; acetoacetate and fumarate from L-phenylalanine: step 3/6. The polypeptide is 4-hydroxyphenylpyruvate dioxygenase (TCRP) (Coccidioides posadasii (strain C735) (Valley fever fungus)).